Consider the following 322-residue polypeptide: Transmembrane and ubiquitin-like domain-containing protein 2 (322 aa).

A helical membrane pass occupies residues Val-38–Val-58. Positions Val-88–Pro-168 are disordered. Positions Glu-115 to Val-130 are enriched in gly residues. Residues Ile-174–Ser-247 form the Ubiquitin-like domain. Transmembrane regions (helical) follow at residues Leu-267–Trp-287 and Phe-296–Val-316.

It is found in the membrane. This Bos taurus (Bovine) protein is Transmembrane and ubiquitin-like domain-containing protein 2 (TMUB2).